A 282-amino-acid polypeptide reads, in one-letter code: NADPH-dependent 7-cyano-7-deazaguanine reductase (282 aa).

Ile-88–Ser-90 is a substrate binding site. Ser-90–Lys-91 is a binding site for NADPH. The active-site Thioimide intermediate is the Cys-190. The Proton donor role is filled by Asp-197. Position 229-230 (His-229–Glu-230) interacts with substrate. Residue Arg-258–Gly-259 coordinates NADPH.

Belongs to the GTP cyclohydrolase I family. QueF type 2 subfamily. In terms of assembly, homodimer.

The protein resides in the cytoplasm. It carries out the reaction 7-aminomethyl-7-carbaguanine + 2 NADP(+) = 7-cyano-7-deazaguanine + 2 NADPH + 3 H(+). It functions in the pathway tRNA modification; tRNA-queuosine biosynthesis. In terms of biological role, catalyzes the NADPH-dependent reduction of 7-cyano-7-deazaguanine (preQ0) to 7-aminomethyl-7-deazaguanine (preQ1). This chain is NADPH-dependent 7-cyano-7-deazaguanine reductase, found in Salmonella paratyphi C (strain RKS4594).